The sequence spans 491 residues: MANYFNTLNLRQQLAQLGKCRFMAREEFADEAGYLKGKKVVIVGCGAQGLNQGLNMRDSGLDVAYALRKEAIDEKRPSWRKATENGFKVGTYEDLIPQADLVVNLTPDKQHTSVVRAVQPLMKDGAALGYSHGFNIVEVGEQVRKDITVVMVAPKCPGTEVREEYKRGFGVPTLIAVHPENDPKGEGMAIAKAWAAATGGHRAGVLESSFVAEVKSDLMGEQTILCGMLQAGSLLCFDKLVAEGTDPAYAEKLIQFGWETITEALKQGGITLMMDRLSNPAKLRAYALSEQLKGIMAPLFQKHMDDIISGAFSGGMMADWAEDDVKLLNWREETGKSAFENAPQFEGKISEQEYFDHGVLMVAMVKAGVELAFETMVDAGIIEESAYYESLHELPLIANTIARKRLYEMNVVISDTAEYGNYLFANAAVPLLKEFMTTLQAGDLGKSVAGTSVDNAQLRDVNEAVRNHPIESVGRKLRGYMTDMKRIAVAG.

In terms of domain architecture, KARI N-terminal Rossmann spans 15–208 (AQLGKCRFMA…GGHRAGVLES (194 aa)). NADP(+) contacts are provided by residues 45-48 (CGAQ), Arg68, Arg76, Ser78, and 108-110 (DKQ). His132 is an active-site residue. Position 158 (Gly158) interacts with NADP(+). KARI C-terminal knotted domains lie at 209 to 344 (SFVA…NAPQ) and 345 to 484 (FEGK…MTDM). Positions 217, 221, 389, and 393 each coordinate Mg(2+). Ser414 is a binding site for substrate.

This sequence belongs to the ketol-acid reductoisomerase family. Mg(2+) is required as a cofactor.

It carries out the reaction (2R)-2,3-dihydroxy-3-methylbutanoate + NADP(+) = (2S)-2-acetolactate + NADPH + H(+). It catalyses the reaction (2R,3R)-2,3-dihydroxy-3-methylpentanoate + NADP(+) = (S)-2-ethyl-2-hydroxy-3-oxobutanoate + NADPH + H(+). Its pathway is amino-acid biosynthesis; L-isoleucine biosynthesis; L-isoleucine from 2-oxobutanoate: step 2/4. It functions in the pathway amino-acid biosynthesis; L-valine biosynthesis; L-valine from pyruvate: step 2/4. Involved in the biosynthesis of branched-chain amino acids (BCAA). Catalyzes an alkyl-migration followed by a ketol-acid reduction of (S)-2-acetolactate (S2AL) to yield (R)-2,3-dihydroxy-isovalerate. In the isomerase reaction, S2AL is rearranged via a Mg-dependent methyl migration to produce 3-hydroxy-3-methyl-2-ketobutyrate (HMKB). In the reductase reaction, this 2-ketoacid undergoes a metal-dependent reduction by NADPH to yield (R)-2,3-dihydroxy-isovalerate. The protein is Ketol-acid reductoisomerase (NADP(+)) of Serratia proteamaculans (strain 568).